The sequence spans 255 residues: Zinc D-Ala-D-Ala carboxypeptidase (255 aa).

Residues 1-42 (MRPRPIRLLLTALVGAGLAFAPVSAVAAPTATASASADVGAL) form the signal peptide. Aspartate 43 carries the post-translational modification Blocked amino end (Asp). 2 cysteine pairs are disulfide-bonded: cysteine 45–cysteine 123 and cysteine 136–cysteine 184. A substrate-binding site is contributed by arginine 180. Zn(2+) is bound at residue histidine 196. A disulfide bridge links cysteine 212 with cysteine 253. Residue histidine 234 is the Proton donor of the active site. Positions 237 and 239 each coordinate Zn(2+).

This sequence belongs to the peptidase M15 family. Zn(2+) is required as a cofactor. Post-translationally, the N-terminus is partially blocked as a result of the cyclization of the first two amino acids into anhydroaspartylglycine imide.

The protein localises to the secreted. It carries out the reaction Cleavage of the bond: (Ac)2-L-lysyl-D-alanyl-|-D-alanine.. Its function is as follows. This enzyme catalyzes carboxypeptidation and transpeptidation reactions involved in bacterial cell wall metabolism. It effectively catalyzes the transfer of the N-alpha, N-epsilon-diacetyl-L-lysyl-D-alanyl electrophilic group of the standard tripeptide substrate N-alpha,N-epsilon-diacetyl-L-lysyl-D-alanyl-D-alanine to water. It also performs a weak beta-lactamase activity, hydrolyzing penicillin into penicilloate at a very low rate. This is Zinc D-Ala-D-Ala carboxypeptidase from Streptomyces albus G.